The sequence spans 492 residues: MSDLQANKDAAAVNRQSSSSSADLNGPSPMRKMISVASIAAGIQFGWALQLSLLTPYVQLLGVPHKWSSFIWLCGPVSGLLVQPSVGYFSDRCKSRFGRRRPFIAMGALLVAVAVVLIGYAADFGHSMGDKVDEPVKMRAVVIFALGFWILDVANNTLQGPCRAFLGDLAAGDAKKTRTANAFFSFFMAVGNVLGYAAGSYTNLYKIFPFTMTKACDIYCANLKSCFFLSITLLLVVTIIALWYVEDKQWSPKADSDNEKTPFFGEIFGAFKVMKRPMWMLLIVTALNWIAWFPFLLYDTDWMGREVYGGDSKGDDKMKKLYNQGIHVGGLGLMLNSIVLGFMSLGIEGISRKMGGAKRLWGAVNIILAVCLAMTVLVTKKAEEHRRIAGPMALPTDGIRAGALTLFALLGIPLAITFSIPFALASIISSSSGAGQGLSLGVLNMTIVIPQMVVSFGVGPIDALFGGGNLPGFVVGAIAAAISSVVAFSVLP.

The segment at 1-26 (MSDLQANKDAAAVNRQSSSSSADLNG) is disordered. At 1–33 (MSDLQANKDAAAVNRQSSSSSADLNGPSPMRKM) the chain is on the cytoplasmic side. Residues 14-23 (NRQSSSSSAD) are compositionally biased toward polar residues. Ser17 is subject to Phosphoserine. A helical transmembrane segment spans residues 34–54 (ISVASIAAGIQFGWALQLSLL). Over 55 to 68 (TPYVQLLGVPHKWS) the chain is Extracellular. The helical transmembrane segment at 69 to 89 (SFIWLCGPVSGLLVQPSVGYF) threads the bilayer. Residues 90–101 (SDRCKSRFGRRR) lie on the Cytoplasmic side of the membrane. Residues 102–122 (PFIAMGALLVAVAVVLIGYAA) traverse the membrane as a helical segment. Residues 123-139 (DFGHSMGDKVDEPVKMR) lie on the Extracellular side of the membrane. Residues 140–160 (AVVIFALGFWILDVANNTLQG) traverse the membrane as a helical segment. Residues 161 to 181 (PCRAFLGDLAAGDAKKTRTAN) are Cytoplasmic-facing. Residues 182 to 202 (AFFSFFMAVGNVLGYAAGSYT) form a helical membrane-spanning segment. At 203–224 (NLYKIFPFTMTKACDIYCANLK) the chain is on the extracellular side. The helical transmembrane segment at 225-245 (SCFFLSITLLLVVTIIALWYV) threads the bilayer. Over 246–277 (EDKQWSPKADSDNEKTPFFGEIFGAFKVMKRP) the chain is Cytoplasmic. A helical transmembrane segment spans residues 278–298 (MWMLLIVTALNWIAWFPFLLY). At 299–324 (DTDWMGREVYGGDSKGDDKMKKLYNQ) the chain is on the extracellular side. A helical transmembrane segment spans residues 325-345 (GIHVGGLGLMLNSIVLGFMSL). Topologically, residues 346–359 (GIEGISRKMGGAKR) are cytoplasmic. The chain crosses the membrane as a helical span at residues 360 to 380 (LWGAVNIILAVCLAMTVLVTK). Residues 381-403 (KAEEHRRIAGPMALPTDGIRAGA) lie on the Extracellular side of the membrane. The chain crosses the membrane as a helical span at residues 404-424 (LTLFALLGIPLAITFSIPFAL). Over 425 to 446 (ASIISSSSGAGQGLSLGVLNMT) the chain is Cytoplasmic. The helical transmembrane segment at 447–467 (IVIPQMVVSFGVGPIDALFGG) threads the bilayer. Residues 468–469 (GN) are Extracellular-facing. Residues 470–490 (LPGFVVGAIAAAISSVVAFSV) traverse the membrane as a helical segment. Over 491–492 (LP) the chain is Cytoplasmic.

It belongs to the glycoside-pentoside-hexuronide (GPH) cation symporter transporter (TC 2.A.2.4) family.

The protein localises to the cell membrane. The protein operates within glycan biosynthesis; sucrose metabolism. Its function is as follows. May be responsible for the transport of glucosides into the cell, with the concomitant uptake of protons (symport system). Does not seem to transport sucrose. The protein is Putative sucrose transport protein SUC6 of Arabidopsis thaliana (Mouse-ear cress).